The following is an 89-amino-acid chain: Mu-theraphotoxin-Phlo1a (89 aa).

Positions 1–22 (MKVSVLITLAVLGVMFVWTSAA) are cleaved as a signal peptide. The propeptide occupies 23–52 (EQEDHGSDRRDSPALLKNLLGEEVFQSEER). 3 disulfides stabilise this stretch: Cys-54/Cys-68, Cys-61/Cys-73, and Cys-67/Cys-81. Position 87 is an isoleucine amide (Ile-87).

It belongs to the neurotoxin 10 (Hwtx-1) family. 39 (Jztx-34) subfamily. In terms of tissue distribution, expressed by the venom gland.

The protein localises to the secreted. Functionally, gating-modifier toxin that inhibits voltage-gated sodium channel Nav by shifting the threshold for channel activation to more positive potentials. This toxin moderately inhibits human Nav1.7/SCN9A (IC(50)=459 nM) and weakly inhibits hNav1.2/SCN2A and hNav1.5/SCN5A (&lt;20% inhibition at 1 uM peptide). Inhibition of Nav1.7 is voltage-dependent, with lower inhibition at more positive test pulses. This chain is Mu-theraphotoxin-Phlo1a, found in Phlogius sp. (Tarantula spider).